The primary structure comprises 270 residues: Bis(5'-nucleosyl)-tetraphosphatase, symmetrical (270 aa).

It belongs to the Ap4A hydrolase family.

It catalyses the reaction P(1),P(4)-bis(5'-adenosyl) tetraphosphate + H2O = 2 ADP + 2 H(+). Hydrolyzes diadenosine 5',5'''-P1,P4-tetraphosphate to yield ADP. The polypeptide is Bis(5'-nucleosyl)-tetraphosphatase, symmetrical (Cellvibrio japonicus (strain Ueda107) (Pseudomonas fluorescens subsp. cellulosa)).